Consider the following 259-residue polypeptide: Protein GrpE (259 aa).

Disordered regions lie at residues 1-74 (MNSD…IKGS) and 228-259 (PGPKVINEEIPDQSASNQELSESVDGSTKDEN). Positions 17–40 (SSQNNPSENSVSSPNSNESVNQVE) are enriched in low complexity. Polar residues-rich tracts occupy residues 56-73 (VDTANEQSSTSCESNIKG) and 240-253 (QSASNQELSESVDG).

Belongs to the GrpE family. Homodimer.

It is found in the cytoplasm. Participates actively in the response to hyperosmotic and heat shock by preventing the aggregation of stress-denatured proteins, in association with DnaK and GrpE. It is the nucleotide exchange factor for DnaK and may function as a thermosensor. Unfolded proteins bind initially to DnaJ; upon interaction with the DnaJ-bound protein, DnaK hydrolyzes its bound ATP, resulting in the formation of a stable complex. GrpE releases ADP from DnaK; ATP binding to DnaK triggers the release of the substrate protein, thus completing the reaction cycle. Several rounds of ATP-dependent interactions between DnaJ, DnaK and GrpE are required for fully efficient folding. The protein is Protein GrpE of Prochlorococcus marinus (strain NATL2A).